We begin with the raw amino-acid sequence, 792 residues long: Kinesin-associated protein 3 (792 aa).

Position 60 is a phosphoserine (Ser-60). A compositionally biased stretch (basic and acidic residues) spans 103-119 (LSGKEKKEKSSKPKDPP). The interval 103–124 (LSGKEKKEKSSKPKDPPPFEGM) is disordered. 5 ARM repeats span residues 333–373 (FMEN…NLSF), 374–412 (DTGLRNKMVQVGLLPKLTALLGNDNYKQIAMCVLYHISM), 494–533 (DGPTKNLFIDYVGDLAAQISNDEEEEFVIECLGTLANLTI), 578–620 (DDSC…QMVF), and 621–662 (HQAT…IIAE).

As to quaternary structure, heterotrimer of KIFAP3, KIF3A and KIF3B. Interacts with RAP1GDS1/SMG GDS. Interacts with SMC3 subunit of the cohesin complex. Post-translationally, phosphorylated on tyrosine residues by SRC in vitro; this reduces the binding affinity of the protein for RAP1GDS1.

Its function is as follows. Involved in tethering the chromosomes to the spindle pole and in chromosome movement. Binds to the tail domain of the KIF3A/KIF3B heterodimer to form a heterotrimeric KIF3 complex and may regulate the membrane binding of this complex. The polypeptide is Kinesin-associated protein 3 (KIFAP3) (Homo sapiens (Human)).